Here is a 96-residue protein sequence, read N- to C-terminus: U-reduvitoxin-Pr12a (96 aa).

The N-terminal stretch at 1–20 is a signal peptide; that stretch reads MKTALLLFFALVFIAFETEA. Disulfide bonds link Cys-21–Cys-38, Cys-33–Cys-53, and Cys-36–Cys-47. 2 Pacifastin domains span residues 21-55 and 59-94; these read CRPGALTVAPDGCNMCTCLSNGKLGRCTHDLICPP and KLECEPGKPFKNDCNDCICSEDGLTAKCTRKLCIHK. A pro-Pro-Arg motif necessary for proteolytic processing region spans residues 54–56; the sequence is PPR. Disulfide bonds link Cys-62–Cys-77, Cys-72–Cys-91, and Cys-75–Cys-86.

This sequence belongs to the protease inhibitor I19 family. In terms of tissue distribution, expressed by the venom gland.

Its subcellular location is the secreted. Inhibits trypsin activity and prophenoloxidase (PPO) activation, an enzyme essential for both clotting and insect innate immune responses. It does not inhibit activity of chymotrypsin and protease K, and has no effect on phenoloxidase (PO) activity. In Platymeris rhadamanthus (Red spot assassin bug), this protein is U-reduvitoxin-Pr12a.